The primary structure comprises 344 residues: N-acetyl-gamma-glutamyl-phosphate reductase (344 aa).

Residue C150 is part of the active site.

The protein belongs to the NAGSA dehydrogenase family. Type 1 subfamily.

The protein resides in the cytoplasm. It catalyses the reaction N-acetyl-L-glutamate 5-semialdehyde + phosphate + NADP(+) = N-acetyl-L-glutamyl 5-phosphate + NADPH + H(+). Its pathway is amino-acid biosynthesis; L-arginine biosynthesis; N(2)-acetyl-L-ornithine from L-glutamate: step 3/4. Functionally, catalyzes the NADPH-dependent reduction of N-acetyl-5-glutamyl phosphate to yield N-acetyl-L-glutamate 5-semialdehyde. The sequence is that of N-acetyl-gamma-glutamyl-phosphate reductase from Pseudomonas putida (strain ATCC 700007 / DSM 6899 / JCM 31910 / BCRC 17059 / LMG 24140 / F1).